A 454-amino-acid polypeptide reads, in one-letter code: Trichosetin biosynthesis cluster transcription factor TF22 (454 aa).

The segment at residues 13 to 47 (CDRCRSHKLKCTVSPEDSRSGPHKCTRCIRAQVTC) is a DNA-binding region (zn(2)-C6 fungal-type). Residues 51 to 89 (PRSQSKRTPNGKNKPEKPKPELEPPQKTSPPVCSSSLAG) are disordered. Polar residues predominate over residues 52–61 (RSQSKRTPNG). Over residues 63-74 (NKPEKPKPELEP) the composition is skewed to basic and acidic residues.

The protein resides in the nucleus. Functionally, transcription factor that regulates the expression of the gene cluster that mediates the biosynthesis of trichosetin, a trans-fused decalin-containing tetramic acid with antimicrobial activity. Directly activates expression of only the three biosynthetic genes PKS-NRPS1, DA and ER, while TF23 and MFS-T are induced by the final product trichosetin and not by TF22. In Gibberella fujikuroi (strain CBS 195.34 / IMI 58289 / NRRL A-6831) (Bakanae and foot rot disease fungus), this protein is Trichosetin biosynthesis cluster transcription factor TF22.